The sequence spans 482 residues: ATP synthase subunit beta (482 aa).

Position 162 to 169 (162 to 169) interacts with ATP; the sequence is GGAGVGKT.

This sequence belongs to the ATPase alpha/beta chains family. As to quaternary structure, F-type ATPases have 2 components, CF(1) - the catalytic core - and CF(0) - the membrane proton channel. CF(1) has five subunits: alpha(3), beta(3), gamma(1), delta(1), epsilon(1). CF(0) has four main subunits: a(1), b(1), b'(1) and c(9-12).

It localises to the cellular thylakoid membrane. The enzyme catalyses ATP + H2O + 4 H(+)(in) = ADP + phosphate + 5 H(+)(out). Produces ATP from ADP in the presence of a proton gradient across the membrane. The catalytic sites are hosted primarily by the beta subunits. This is ATP synthase subunit beta from Nostoc punctiforme (strain ATCC 29133 / PCC 73102).